The primary structure comprises 185 residues: Ribosome-recycling factor (185 aa).

It belongs to the RRF family.

The protein localises to the cytoplasm. Its function is as follows. Responsible for the release of ribosomes from messenger RNA at the termination of protein biosynthesis. May increase the efficiency of translation by recycling ribosomes from one round of translation to another. The polypeptide is Ribosome-recycling factor (Nitrosospira multiformis (strain ATCC 25196 / NCIMB 11849 / C 71)).